Consider the following 239-residue polypeptide: Large ribosomal subunit protein uL3 (239 aa).

Disordered regions lie at residues 140 to 166 and 211 to 239; these read SHRS…PGHM and PLPK…QEGA. N5-methylglutamine is present on Gln-151.

This sequence belongs to the universal ribosomal protein uL3 family. In terms of assembly, part of the 50S ribosomal subunit. Forms a cluster with proteins L14 and L19. Post-translationally, methylated by PrmB.

In terms of biological role, one of the primary rRNA binding proteins, it binds directly near the 3'-end of the 23S rRNA, where it nucleates assembly of the 50S subunit. The sequence is that of Large ribosomal subunit protein uL3 from Bradyrhizobium sp. (strain BTAi1 / ATCC BAA-1182).